A 766-amino-acid polypeptide reads, in one-letter code: 5-methyltetrahydropteroyltriglutamate--homocysteine methyltransferase (766 aa).

Residues 16–19 (RELK) and Lys122 each bind 5-methyltetrahydropteroyltri-L-glutamate. Residues 443-445 (IGS) and Glu496 each bind L-homocysteine. L-methionine contacts are provided by residues 443-445 (IGS) and Glu496. Residues 527 to 528 (RC) and Trp573 contribute to the 5-methyltetrahydropteroyltri-L-glutamate site. Asp611 contacts L-homocysteine. Asp611 contacts L-methionine. Glu617 contacts 5-methyltetrahydropteroyltri-L-glutamate. Residues His653, Cys655, and Glu677 each coordinate Zn(2+). Residue His706 is the Proton donor of the active site. Cys738 contacts Zn(2+).

It belongs to the vitamin-B12 independent methionine synthase family. Requires Zn(2+) as cofactor.

It catalyses the reaction 5-methyltetrahydropteroyltri-L-glutamate + L-homocysteine = tetrahydropteroyltri-L-glutamate + L-methionine. Its pathway is amino-acid biosynthesis; L-methionine biosynthesis via de novo pathway; L-methionine from L-homocysteine (MetE route): step 1/1. In terms of biological role, catalyzes the transfer of a methyl group from 5-methyltetrahydrofolate to homocysteine resulting in methionine formation. This chain is 5-methyltetrahydropteroyltriglutamate--homocysteine methyltransferase, found in Pseudomonas putida (strain W619).